A 293-amino-acid polypeptide reads, in one-letter code: Short-chain dehydrogenase/reductase PhomF' (293 aa).

NADP(+)-binding residues include I31 and N102. The Proton donor role is filled by S175. Y190, K194, and S225 together coordinate NADP(+). The active-site Proton acceptor is the Y190. Residue K194 is the Lowers pKa of active site Tyr of the active site.

Belongs to the short-chain dehydrogenases/reductases (SDR) family.

Short-chain dehydrogenase/reductase; part of the gene cluster that mediates the biosynthesis of the phomopsins, a group of hexapeptide mycotoxins which infects lupins and causes lupinosis disease in livestock. The role of phomF' within the phomopsins biosynthesis pathway has still to be determined. The pathway starts with the processing of the precursor phomA by several endopeptidases including kexin proteases as well as the cluster-specific S41 family peptidase phomP1 and the oligopeptidase phomG to produce 10 identical copies of the hexapeptide Tyr-Val-Ile-Pro-Ile-Asp. After being excised from the precursor peptide, the core peptides are cyclized and modified post-translationally by enzymes encoded within the gene cluster. The timing and order of proteolysis of the phomA precursor and PTMs are still unknown. Two tyrosinase-like enzymes, phomQ1 and phomQ2, catalyze the chlorination and hydroxylation of Tyr, respectively. PhomYb, is proposed to be involved in the construction of the macrocyclic structure. The other 4 ustYa family proteins may be involved in PTMs that generate the unique structure of phomopsin A. PhomYa is required for the hydroxylation of C-beta of Tyr. PhomYc, phomYd, and phomYe are responsible for the biosynthesis of 2,3-dehydroisoleucine (dIle), 2,3-dehydroaspartic acid (dAsp), and 3,4-dehydroproline (dPro), respectively. While dIle formation by phomYc is indispensable for the installation of dAsp by phomYd, the order of the other PTMs have not been elucidated yet. Most of the biosynthetic enzymes likely have broad substrate specificity, and thus, there might be a metabolic grid from a precursor to phomopsin A. The enzyme(s) responsible for the biosynthesis of 3,4-dehydrovaline (dVal) have also not been identified yet. Finally, phomM acts as an S-adenosylmethionine-dependent alpha-N-methyltransferase that catalyzes two successive N-methylation reactions, converting N-desmethyl-phomopsin A to phomopsin A and phomopsin A further to an N,N-dimethylated congener called phomopsin E. This Diaporthe leptostromiformis (Lupinosis disease fungus) protein is Short-chain dehydrogenase/reductase PhomF'.